The chain runs to 372 residues: Cytoplasmic envelopment protein 2 (372 aa).

A disordered region spans residues M1–P38. A compositionally biased stretch (low complexity) spans A20–D30.

Belongs to the herpesviridae cytoplasmic envelopment protein 2 family. In terms of assembly, interacts with cytoplasmic envelopment protein 3 and with the capsid.

It is found in the virion tegument. The protein localises to the host cytoplasm. The protein resides in the host nucleus. Functionally, plays a critical role in cytoplasmic virus egress. Participates in the final step of tegumentation and envelope acquisition within the host cytoplasm by directly interacting with the capsid. Upon virion binding to target cell, a signaling cascade is triggered to disrupt the interaction with the capsid, thereby preparing capsid uncoating. The protein is Cytoplasmic envelopment protein 2 (UL16) of Human herpesvirus 2 (strain HG52) (HHV-2).